The following is a 463-amino-acid chain: Quinolone resistance protein NorB (463 aa).

14 helical membrane-spanning segments follow: residues 17–37 (IGIVLSVITFWLFAQSLVNVV), 53–73 (IAVSITALFSGMFVVGAGGLA), 86–106 (IILNILGSLLIIISNIPLLLI), 107–127 (IGRLIQGLSAACIMPATLSII), 142–162 (YWSIGSWGGSGVCSFFGGAVA), 165–185 (LGWRWIFILSIIISLIALFLI), 201–221 (FDIKGLVLLVIMLLTLNILIT), 230–250 (SLLFITLLAIAIGSFSLFIVL), 273–293 (TASNFLLNGVAGTLIVANTFV), 299–319 (YSSLQAGSLSITYLVMVLIMI), 334–354 (PMLIGTGVLIVGECLISLTFL), 357–377 (ILYVICCIIGYLFFGLGLGIY), 403–423 (MASALGGAFGVALSGAVYAIV), and 435–455 (IALWLNAGMGILSFVIILLLV).

Belongs to the major facilitator superfamily. TCR/Tet family.

It localises to the cell membrane. In terms of biological role, multidrug efflux pump that acts independently of NorA and is one of the factors that confers resistance against diverse quinolones and chemical compounds. This chain is Quinolone resistance protein NorB (norB), found in Staphylococcus aureus (strain Mu3 / ATCC 700698).